We begin with the raw amino-acid sequence, 219 residues long: LHFPL tetraspan subfamily member 5 protein (219 aa).

Residues 1-24 are Cytoplasmic-facing; it reads MVKLLPAQEAAKIYHTNYVRNSRA. A helical membrane pass occupies residues 25–45; the sequence is VGVMWGTLTICFSVLVMALFI. Residues 46 to 98 are Extracellular-facing; it reads QPYWIGDSVSTPQAGYFGLFSYCVGNVLSSELICKGGPLDFSSIPSRAFKTAM. Residues 99–119 traverse the membrane as a helical segment; the sequence is FFVALAMFLIIGSIICFSLFF. The Cytoplasmic segment spans residues 120-128; that stretch reads VCNTATVYK. A helical transmembrane segment spans residues 129–149; it reads ICAWMQLAAATGLMIGCLVYP. Topologically, residues 150–178 are extracellular; that stretch reads DGWDSSEVRRMCGEQTGKYTLGHCTIRWA. A helical transmembrane segment spans residues 179 to 199; the sequence is FMLAILSIGDALILSFLAFVL. Residues 200–219 are Cytoplasmic-facing; it reads GYRQDKLLPDDYKADGNEEV.

The protein belongs to the LHFP family. Forms the MET channel composed of TMC (TMC1 or TMC2), TMIE, TOMT, CIB (CIB2 or CIB3), LHPL5 and PCDH15. Interaction with PCDH15 is required for efficient localization to hair bundles.

The protein localises to the cell membrane. Its function is as follows. Auxiliary subunit of the mechanotransducer (MET) non-specific cation channel complex located at the tips of the shorter stereocilia of cochlear hair cells and that mediates sensory transduction in the auditory system. The MET complex is composed of two dimeric pore-forming ion-conducting transmembrane TMC (TMC1 or TMC2) subunits, and aided by several auxiliary proteins including LHFPL5, TMIE, CIB2/3 and TOMT, and the tip-link PCDH15. Functionally couples PCDH15 to the transduction channel. This chain is LHFPL tetraspan subfamily member 5 protein, found in Rattus norvegicus (Rat).